The following is a 146-amino-acid chain: DNA-binding protein Rv2175c (146 aa).

Residues Met-1–Glu-27 form a disordered region. At Thr-9 the chain carries Phosphothreonine.

As to quaternary structure, monomer in solution. May form homodimers. Interacts with phosphorylated PknL. Post-translationally, phosphorylated by PknL. Phosphorylation negatively regulates DNA-binding activity.

Functionally, binds DNA at low salt concentrations. The protein is DNA-binding protein Rv2175c of Mycobacterium tuberculosis (strain ATCC 25618 / H37Rv).